We begin with the raw amino-acid sequence, 944 residues long: MNWNKGGPGTKRGFGFGGFAITPGKKEEPKLSQQSHSAFGTAGSSAAFAKSGPPQLPSFYKIGSKRANFDEENAYFEDEEEDNSNVDLPYIPAENSPTRQQFNSKSADSDSDDDPLEAFMAEVEDQAARDMKRLEDKDKEKKNAKGIRDDIEEEDDQEAYFRYMAENPTAGVVQEEEEDNLEYDSDGNPIAPSKKIIDPLPPIDHSEIEYPPFEKNFYDEHEEITSLTPQQVVELRHKLNLRVSGAAPPRPGSSFARFGFDEQLMHQIRKSEYTQPTPIQCQGVPVAMSGRDMIGIAKTGSGKTAAFIWPMLIHIMDQKELEPGDGPIAVIVCPTRELCQQIHSECKRFGKAYNLRSVAVYGGGSMWEQAKALQEGAEIVVCTPGRLIDHVKKKATNLQRVTYLVFDEADRMFDMGFEYQVRSIASHVRPDRQTLLFSATFRKKIEKLARDILIDPIRVVQGDIGEANEDVTQIVEIFPSGPSKWNWLTRRLVEFTSSGSVLLFVTKKANAEELANNLKQEDHNLGLLHGDMDQSERNKVISEFKKKGIPILVATDVAARGLDIPSIKTVINYDVARDIDTHTHRIGRTGRAGEKGVAYTLLTPKDSNFAGDLVRNLEGANQHVSKELLDLAMQNPWFRKSRFKGGKGKKPNIGGGGLGYRERPGLGSESSDRGNNNSVMSNYEAYKPSSGAMGDRLTAMKAAFQSQYKSHFVAASLNNQKTGSSAAGASGWTSAGSLNSVPTSSAQQNAANPDSPIAATAAAKGVPGFTSTGTLSSVPTFPSVGVQGYSNNSSANASAGNREGVGSAGSAPRGGSSGGGGGGIVRERYSDNRNSRHNEVPRRGEGGGRYNDVQHHGEGGGRYSDAYRHGEGRHGDSHRHAEGRHFTDTGGGNRNNVDGRNISEGRSNESRNGENRKDANSRDNKTDGFAVPEPPKRKKSRWDS.

The span at 1–18 (MNWNKGGPGTKRGFGFGG) shows a compositional bias: gly residues. Disordered stretches follow at residues 1-119 (MNWN…LEAF), 131-155 (MKRL…EEED), and 182-203 (EYDS…LPPI). The segment covering 35 to 52 (SHSAFGTAGSSAAFAKSG) has biased composition (low complexity). The segment covering 70–84 (DEENAYFEDEEEDNS) has biased composition (acidic residues). Positions 120–157 (MAEVEDQAARDMKRLEDKDKEKKNAKGIRDDIEEEDDQ) form a coiled coil. The segment covering 131-149 (MKRLEDKDKEKKNAKGIRD) has biased composition (basic and acidic residues). A Q motif motif is present at residues 253–281 (SSFARFGFDEQLMHQIRKSEYTQPTPIQC). One can recognise a Helicase ATP-binding domain in the interval 284-459 (VPVAMSGRDM…RDILIDPIRV (176 aa)). Position 297–304 (297–304 (AKTGSGKT)) interacts with ATP. Residues 407-410 (DEAD) carry the DEAD box motif. Residues 487-632 (WLTRRLVEFT…HVSKELLDLA (146 aa)) enclose the Helicase C-terminal domain. Disordered regions lie at residues 642 to 682 (RFKG…VMSN), 723 to 753 (GSSA…AANP), and 794 to 944 (SANA…RWDS). The span at 723–737 (GSSAAGASGWTSAGS) shows a compositional bias: low complexity. Residues 738–752 (LNSVPTSSAQQNAAN) show a composition bias toward polar residues. Residues 794–814 (SANASAGNREGVGSAGSAPRG) show a composition bias toward low complexity. Positions 815-824 (GSSGGGGGGI) are enriched in gly residues. Composition is skewed to basic and acidic residues over residues 825 to 887 (VRER…RHFT) and 901 to 926 (NISE…DNKT).

It belongs to the DEAD box helicase family. DDX42 subfamily. As to quaternary structure, transient component of the SF3B subcomplex of the 17S U2 SnRNP complex.

It is found in the cytoplasm. The protein localises to the nucleus. It catalyses the reaction ATP + H2O = ADP + phosphate + H(+). Functionally, ATP-dependent RNA helicase that binds to partially double-stranded RNAs (dsRNAs) in order to unwind RNA secondary structures. Unwinding is promoted in the presence of single-strand binding proteins. Also mediates RNA duplex formation thereby displacing the single-strand RNA binding protein. ATP and ADP modulate its activity: ATP binding and hydrolysis by DDX42 triggers RNA strand separation, whereas the ADP-bound form of the protein triggers annealing of complementary RNA strands. Required for assembly of the 17S U2 SnRNP complex of the spliceosome, a large ribonucleoprotein complex that removes introns from transcribed pre-mRNAs: DDX42 associates transiently with the SF3B subcomplex of the 17S U2 SnRNP complex and is released after fulfilling its role in the assembly of 17S U2 SnRNP. This is ATP-dependent RNA helicase DDX42 (DDX42) from Gallus gallus (Chicken).